The sequence spans 335 residues: Holliday junction branch migration complex subunit RuvB (335 aa).

A large ATPase domain (RuvB-L) region spans residues 1–183; it reads MDERIISSET…FGVIDHLEFY (183 aa). Residues Leu-22, Arg-23, Gly-64, Lys-67, Thr-68, Thr-69, 130–132, Arg-173, Tyr-183, and Arg-220 each bind ATP; that span reads EDY. Mg(2+) is bound at residue Thr-68. Residues 184–254 form a small ATPAse domain (RuvB-S) region; sequence TEEQLTEIVL…LAKEALTLLQ (71 aa). The segment at 257 to 335 is head domain (RuvB-H); it reads PRGLDTIDQK…HLGISYEKEV (79 aa). Residues Arg-293, Arg-312, and Arg-317 each contribute to the DNA site.

This sequence belongs to the RuvB family. As to quaternary structure, homohexamer. Forms an RuvA(8)-RuvB(12)-Holliday junction (HJ) complex. HJ DNA is sandwiched between 2 RuvA tetramers; dsDNA enters through RuvA and exits via RuvB. An RuvB hexamer assembles on each DNA strand where it exits the tetramer. Each RuvB hexamer is contacted by two RuvA subunits (via domain III) on 2 adjacent RuvB subunits; this complex drives branch migration. In the full resolvosome a probable DNA-RuvA(4)-RuvB(12)-RuvC(2) complex forms which resolves the HJ.

The protein resides in the cytoplasm. It carries out the reaction ATP + H2O = ADP + phosphate + H(+). The RuvA-RuvB-RuvC complex processes Holliday junction (HJ) DNA during genetic recombination and DNA repair, while the RuvA-RuvB complex plays an important role in the rescue of blocked DNA replication forks via replication fork reversal (RFR). RuvA specifically binds to HJ cruciform DNA, conferring on it an open structure. The RuvB hexamer acts as an ATP-dependent pump, pulling dsDNA into and through the RuvAB complex. RuvB forms 2 homohexamers on either side of HJ DNA bound by 1 or 2 RuvA tetramers; 4 subunits per hexamer contact DNA at a time. Coordinated motions by a converter formed by DNA-disengaged RuvB subunits stimulates ATP hydrolysis and nucleotide exchange. Immobilization of the converter enables RuvB to convert the ATP-contained energy into a lever motion, pulling 2 nucleotides of DNA out of the RuvA tetramer per ATP hydrolyzed, thus driving DNA branch migration. The RuvB motors rotate together with the DNA substrate, which together with the progressing nucleotide cycle form the mechanistic basis for DNA recombination by continuous HJ branch migration. Branch migration allows RuvC to scan DNA until it finds its consensus sequence, where it cleaves and resolves cruciform DNA. This is Holliday junction branch migration complex subunit RuvB from Listeria monocytogenes serotype 4a (strain HCC23).